A 57-amino-acid polypeptide reads, in one-letter code: Large ribosomal subunit protein bL32 (57 aa).

The protein belongs to the bacterial ribosomal protein bL32 family.

The polypeptide is Large ribosomal subunit protein bL32 (rpmF) (Halalkalibacterium halodurans (strain ATCC BAA-125 / DSM 18197 / FERM 7344 / JCM 9153 / C-125) (Bacillus halodurans)).